Consider the following 196-residue polypeptide: MAMLSTSVVPEAFSTPGWQIEKKYSTKVLLGNWVEERGKFTKAIDHTPQCIYRKEYVPMPDHRPDFVSRWYSKSKMEGLPYKHLITHHQEPSHRYLISTYDDHYNRHNYNPGLPALRTWNGQKLLWLPEKSDFPLVAPPTNYGLLEQLQQKWLASKTSLKESIYTTSYPRLPVCAMSRREHAIPVPHPRLQPIPRF.

Mn stretches follow at residues 47–62 and 97–109; these read TPQC…MPDH and ISTY…RHNY.

As to quaternary structure, microtubule inner protein component of sperm flagellar doublet microtubules.

It is found in the cytoplasm. Its subcellular location is the cytoskeleton. It localises to the cilium axoneme. The protein localises to the flagellum axoneme. Its function is as follows. Microtubule inner protein (MIP) part of the dynein-decorated doublet microtubules (DMTs) in cilia axoneme, which is required for motile cilia beating. In Mus musculus (Mouse), this protein is Cilia- and flagella-associated protein 107.